Consider the following 116-residue polypeptide: G antigen 10 (116 aa).

The disordered stretch occupies residues 1-116 (MSWRGRSTYR…PEEGEKQSQC (116 aa)). Acidic residues predominate over residues 31-44 (FSDEVEPATPEEGE). Composition is skewed to basic and acidic residues over residues 71–80 (PEADSQEQVH) and 102–116 (EEVK…QSQC).

It belongs to the GAGE family.

The sequence is that of G antigen 10 (GAGE10) from Homo sapiens (Human).